The chain runs to 234 residues: Probable transcriptional regulatory protein PSPTO_3162 (234 aa).

The protein belongs to the TACO1 family.

The protein localises to the cytoplasm. This chain is Probable transcriptional regulatory protein PSPTO_3162, found in Pseudomonas syringae pv. tomato (strain ATCC BAA-871 / DC3000).